The sequence spans 409 residues: MARAKFERNKPHVNIGTIGHVDHGKTTLTAAITMSLAAQGKAKARNYADIDAAPEEKARGITINTAHVEYETEGRHYAHVDCPGHADYVKNMITGAAQMDGAILVVSAADGPMPQTREHILLAKQVGVPNIVIFLNKQDMVDDEELLELVELEVRELLSDYDFDGDNIPIVAGSALQAVEALTANPGIGKGENEWVDKILSLMDEVDGYIPQPERDVDKPFLMAVEDVFSITGRGTVATGRIERGKIKVGETVELVGIKDTRNSTVTGVEMFQKILDEGMAGDNVGLLLRGMQKDDIQRGMVLAKSGSITPHKKFESEVYVLKKEEGGRHTPFFPNYRPQFYIRTTDVTGAIESFTADDGSVAEMVMPGDRIKMTVQLINPVAIEQGMRFAIREGGRTIGAGVVSKIVE.

One can recognise a tr-type G domain in the interval 10-214 (KPHVNIGTIG…EVDGYIPQPE (205 aa)). The G1 stretch occupies residues 19 to 26 (GHVDHGKT). 19–26 (GHVDHGKT) lines the GTP pocket. A Mg(2+)-binding site is contributed by Thr-26. Residues 60 to 64 (GITIN) are G2. Residues 81-84 (DCPG) form a G3 region. Residues 81–85 (DCPGH) and 136–139 (NKQD) contribute to the GTP site. The interval 136 to 139 (NKQD) is G4. Positions 174–176 (SAL) are G5.

Belongs to the TRAFAC class translation factor GTPase superfamily. Classic translation factor GTPase family. EF-Tu/EF-1A subfamily. Monomer.

The protein resides in the cytoplasm. The catalysed reaction is GTP + H2O = GDP + phosphate + H(+). Its function is as follows. GTP hydrolase that promotes the GTP-dependent binding of aminoacyl-tRNA to the A-site of ribosomes during protein biosynthesis. The sequence is that of Elongation factor Tu from Trichodesmium erythraeum (strain IMS101).